The sequence spans 596 residues: Heat shock factor protein 5 (596 aa).

The DNA-binding element occupies 10-200 (NPNNFPAKLW…FHRSFRRDSL (191 aa)). The segment at 541 to 576 (EMGPASKPSEDTGLATPARYREHRSNSQQGKSPDLH) is disordered. A Phosphoserine modification is found at S572.

It belongs to the HSF family. Homooligomer.

It is found in the nucleus. It localises to the chromosome. Its function is as follows. DNA-binding transcription factor that is essential for male fertility, spermatogenesis and meiotic prophase progression in spermatocytes under non-stress conditions. Positvely and negatively regulates gene expression to ensure progression of meiotic prophase beyond pachytene stage in spermatocytes. Plays a role in male germline meiotic sex chromosome remodeling and silencing through regulation of SMARCA4. The protein is Heat shock factor protein 5 (HSF5) of Homo sapiens (Human).